The primary structure comprises 229 residues: ATP synthase subunit a (229 aa).

Helical transmembrane passes span 14–34, 68–88, 98–118, 124–144, 157–179, and 189–209; these read LIAITNSSMMMMLAVAVALIL, YFPFVFTLFIFIVFLNILGLF, IVVTLGLSFSIVIGVTLGGLW, FLSILMPAGAPLALAPLLVLI, GVRLAANLSAGHLLFAILAGFGF, and NIFPVLIMVFISLLEAAVAVI.

Belongs to the ATPase A chain family. F-type ATPases have 2 components, CF(1) - the catalytic core - and CF(0) - the membrane proton channel. CF(1) has five subunits: alpha(3), beta(3), gamma(1), delta(1), epsilon(1). CF(0) has three main subunits: a, b and c.

It is found in the mitochondrion inner membrane. Its function is as follows. Mitochondrial membrane ATP synthase (F(1)F(0) ATP synthase or Complex V) produces ATP from ADP in the presence of a proton gradient across the membrane which is generated by electron transport complexes of the respiratory chain. F-type ATPases consist of two structural domains, F(1) - containing the extramembraneous catalytic core and F(0) - containing the membrane proton channel, linked together by a central stalk and a peripheral stalk. During catalysis, ATP synthesis in the catalytic domain of F(1) is coupled via a rotary mechanism of the central stalk subunits to proton translocation. Key component of the proton channel; it may play a direct role in the translocation of protons across the membrane. The protein is ATP synthase subunit a (ATPASE6) of Metridium senile (Brown sea anemone).